We begin with the raw amino-acid sequence, 571 residues long: RUN and FYVE domain-containing protein 4 (571 aa).

An RUN domain is found at 33–166 (TDTSAELHRL…VAFELDLQQP (134 aa)). A disordered region spans residues 174–207 (MFSESRCSSSTQTQGRRPRKNKDAPKKIPAAYGG). The span at 178–188 (SRCSSSTQTQG) shows a compositional bias: polar residues. Residues 408–481 (EVSLQDEIKS…ERRDAMYQEE (74 aa)) adopt a coiled-coil conformation. An FYVE-type zinc finger spans residues 474–567 (RDAMYQEELG…CCPPCAQGRE (94 aa)). Positions 521, 524, 537, 540, 545, 548, 559, and 562 each coordinate Zn(2+).

Forms homodimers (via coiled coil domain). Interacts with RAB7A. Forms a ternary complex with RAB7A and LAMP2; the interaction with RAB7A is mediated by RUFY4 (via RUN and coiled coil domains). Interacts with GTP-, but not GDP-bound ARL8A and ARL8B. Interacts with dynactin/DCTN1 and the dynein intermediate chain DYNC1I1/2.

It is found in the cytoplasmic vesicle. The protein localises to the autophagosome. The protein resides in the lysosome. Its function is as follows. ARL8 effector that promotes the coupling of endolysosomes to dynein-dynactin for retrograde transport along microtubules. Acts by binding both GTP-bound ARL8 and dynein-dynactin. In nonneuronal cells, promotes concentration of endolysosomes in the juxtanuclear area. In hippocampal neurons, drives retrograde transport of endolysosomes from the axon to the soma. Positive regulator of macroautophagy in dendritic cells. Increases autophagic flux, probably by stimulating both autophagosome formation and facilitating tethering with lysosomes. Binds to phosphatidylinositol 3-phosphate (PtdIns3P) through its FYVE-type zinc finger. Positive regulator of osteosclast bone-resorbing activity, possibly by promoting late endosome-lysosome fusion by acting as an adapter protein between RAB7A on late endosomes and LAMP2 on primary lysosomes. The polypeptide is RUN and FYVE domain-containing protein 4 (RUFY4) (Homo sapiens (Human)).